Consider the following 412-residue polypeptide: Gamma-glutamyl phosphate reductase (412 aa).

It belongs to the gamma-glutamyl phosphate reductase family.

Its subcellular location is the cytoplasm. It catalyses the reaction L-glutamate 5-semialdehyde + phosphate + NADP(+) = L-glutamyl 5-phosphate + NADPH + H(+). It functions in the pathway amino-acid biosynthesis; L-proline biosynthesis; L-glutamate 5-semialdehyde from L-glutamate: step 2/2. Catalyzes the NADPH-dependent reduction of L-glutamate 5-phosphate into L-glutamate 5-semialdehyde and phosphate. The product spontaneously undergoes cyclization to form 1-pyrroline-5-carboxylate. This Bartonella bacilliformis (strain ATCC 35685 / KC583 / Herrer 020/F12,63) protein is Gamma-glutamyl phosphate reductase.